Reading from the N-terminus, the 157-residue chain is Thioredoxin-T (157 aa).

The Thioredoxin domain occupies 2-107; that stretch reads VYPVRNKDDL…LAKLMEKHAG (106 aa). A disulfide bridge links Cys32 with Cys35. The tract at residues 132-157 is disordered; the sequence is ESSESDNDNNNVNEVSAHDENAVLEH. Positions 147–157 are enriched in basic and acidic residues; the sequence is SAHDENAVLEH.

Belongs to the thioredoxin family. In terms of tissue distribution, testis specific. Not expressed in the embryo. Becomes progressively more strongly expressed during larval and pupal development. In testis, it is strongly expressed in young spermatocytes, and postmeiotic spermatid stages, then expression decreases at the nuclear elongation stage. Strongly expressed in the waste bag, in which material no longer needed for the mature sperm is eliminated. Not expressed in the stem cells and spermatogonial cells.

It localises to the nucleus. The protein localises to the chromosome. Probably participates in various redox reactions through the reversible oxidation of its active center dithiol to a disulfide and catalyzes dithiol-disulfide exchange reactions. Its tissue specificity suggests a regulatory role in the germline. This chain is Thioredoxin-T (TrxT), found in Drosophila melanogaster (Fruit fly).